The following is a 170-amino-acid chain: Phosphopantetheine adenylyltransferase (170 aa).

A substrate-binding site is contributed by T17. ATP contacts are provided by residues 17–18 and H25; that span reads TF. Substrate is bound by residues K49, L81, and R95. ATP-binding positions include 96–98, E106, and 131–137; these read GLR and LMYISST.

The protein belongs to the bacterial CoaD family. As to quaternary structure, homohexamer. The cofactor is Mg(2+).

Its subcellular location is the cytoplasm. It catalyses the reaction (R)-4'-phosphopantetheine + ATP + H(+) = 3'-dephospho-CoA + diphosphate. The protein operates within cofactor biosynthesis; coenzyme A biosynthesis; CoA from (R)-pantothenate: step 4/5. Its function is as follows. Reversibly transfers an adenylyl group from ATP to 4'-phosphopantetheine, yielding dephospho-CoA (dPCoA) and pyrophosphate. The polypeptide is Phosphopantetheine adenylyltransferase (Legionella pneumophila subsp. pneumophila (strain Philadelphia 1 / ATCC 33152 / DSM 7513)).